Here is a 370-residue protein sequence, read N- to C-terminus: Histidinol-phosphate aminotransferase (370 aa).

Lysine 231 is subject to N6-(pyridoxal phosphate)lysine.

The protein belongs to the class-II pyridoxal-phosphate-dependent aminotransferase family. Histidinol-phosphate aminotransferase subfamily. As to quaternary structure, homodimer. The cofactor is pyridoxal 5'-phosphate.

The catalysed reaction is L-histidinol phosphate + 2-oxoglutarate = 3-(imidazol-4-yl)-2-oxopropyl phosphate + L-glutamate. Its pathway is amino-acid biosynthesis; L-histidine biosynthesis; L-histidine from 5-phospho-alpha-D-ribose 1-diphosphate: step 7/9. This Paracidovorax citrulli (strain AAC00-1) (Acidovorax citrulli) protein is Histidinol-phosphate aminotransferase.